Consider the following 188-residue polypeptide: Small ribosomal subunit protein uS7 (188 aa).

The protein belongs to the universal ribosomal protein uS7 family. As to quaternary structure, part of the 30S ribosomal subunit.

Its function is as follows. One of the primary rRNA binding proteins, it binds directly to 16S rRNA where it nucleates assembly of the head domain of the 30S subunit. Is located at the subunit interface close to the decoding center. This Methanococcus aeolicus (strain ATCC BAA-1280 / DSM 17508 / OCM 812 / Nankai-3) protein is Small ribosomal subunit protein uS7.